A 130-amino-acid polypeptide reads, in one-letter code: MNIIQQYEAREIERLSGVRAVPEFIAGDTVRVGVRVVEGTRERVQSFEGVVIARSNKGLNSNFTVRKISNGEGVERVFPLYAPSIASIEVVRRGKVRRAKLYYLRGRSGKSARIAERPRDLPKADSMAAS.

This sequence belongs to the bacterial ribosomal protein bL19 family.

This protein is located at the 30S-50S ribosomal subunit interface and may play a role in the structure and function of the aminoacyl-tRNA binding site. This is Large ribosomal subunit protein bL19 from Gluconobacter oxydans (strain 621H) (Gluconobacter suboxydans).